A 165-amino-acid polypeptide reads, in one-letter code: Ribosomal RNA large subunit methyltransferase H (165 aa).

Gly-109 contributes to the S-adenosyl-L-methionine binding site.

The protein belongs to the RNA methyltransferase RlmH family. Homodimer.

The protein resides in the cytoplasm. The enzyme catalyses pseudouridine(1915) in 23S rRNA + S-adenosyl-L-methionine = N(3)-methylpseudouridine(1915) in 23S rRNA + S-adenosyl-L-homocysteine + H(+). Specifically methylates the pseudouridine at position 1915 (m3Psi1915) in 23S rRNA. This is Ribosomal RNA large subunit methyltransferase H from Methylorubrum extorquens (strain CM4 / NCIMB 13688) (Methylobacterium extorquens).